The following is a 436-amino-acid chain: 3-ketoacyl-CoA thiolase (436 aa).

Cys99 functions as the Acyl-thioester intermediate in the catalytic mechanism. Catalysis depends on proton acceptor residues His392 and Cys422.

The protein belongs to the thiolase-like superfamily. Thiolase family. In terms of assembly, heterotetramer of two alpha chains (FadJ) and two beta chains (FadI).

The protein localises to the cytoplasm. It catalyses the reaction an acyl-CoA + acetyl-CoA = a 3-oxoacyl-CoA + CoA. The protein operates within lipid metabolism; fatty acid beta-oxidation. Its function is as follows. Catalyzes the final step of fatty acid oxidation in which acetyl-CoA is released and the CoA ester of a fatty acid two carbons shorter is formed. This is 3-ketoacyl-CoA thiolase from Shewanella baltica (strain OS155 / ATCC BAA-1091).